A 299-amino-acid chain; its full sequence is Phosphoribosylaminoimidazole-succinocarboxamide synthase (299 aa).

Belongs to the SAICAR synthetase family.

It catalyses the reaction 5-amino-1-(5-phospho-D-ribosyl)imidazole-4-carboxylate + L-aspartate + ATP = (2S)-2-[5-amino-1-(5-phospho-beta-D-ribosyl)imidazole-4-carboxamido]succinate + ADP + phosphate + 2 H(+). It functions in the pathway purine metabolism; IMP biosynthesis via de novo pathway; 5-amino-1-(5-phospho-D-ribosyl)imidazole-4-carboxamide from 5-amino-1-(5-phospho-D-ribosyl)imidazole-4-carboxylate: step 1/2. The polypeptide is Phosphoribosylaminoimidazole-succinocarboxamide synthase (Leifsonia xyli subsp. xyli (strain CTCB07)).